We begin with the raw amino-acid sequence, 206 residues long: Large ribosomal subunit protein uL4 (206 aa).

The tract at residues Met-63 to Val-93 is disordered. Residues Tyr-64–Ala-77 are compositionally biased toward basic residues.

Belongs to the universal ribosomal protein uL4 family. In terms of assembly, part of the 50S ribosomal subunit.

Its function is as follows. One of the primary rRNA binding proteins, this protein initially binds near the 5'-end of the 23S rRNA. It is important during the early stages of 50S assembly. It makes multiple contacts with different domains of the 23S rRNA in the assembled 50S subunit and ribosome. In terms of biological role, forms part of the polypeptide exit tunnel. The chain is Large ribosomal subunit protein uL4 from Rhizobium meliloti (strain 1021) (Ensifer meliloti).